We begin with the raw amino-acid sequence, 558 residues long: MALKGQEDYIYLFKDSTHPVDFLDAFRTFYLDGLFTDITLQCPSGIIFHCHRAVLAACSNYFKAMFTADMKEKFKNKIKLSGIHHDILEGLVNYAYTSQIEITERNVQSLLEAADLLQFLSVKKACERFLVRHLDIDNCIGMHSFAEFHVCPELEKESRRILCSKFKEVWQQEEFLEISLEKFLFILSRKNLSVWKEEAIIEPVIKWTAHDVENRIECLCNLLSYINIDVDPVYLKTALGLQRSCLFTENKIRSLIYNALNPMHKEISQRSTATMYIIGGYYWHPLSEVHIWDPLTNVWIQGAEIPDYTRESYGVTCLGPNIYVTGGYRTDNIEALDTVWIYNSESDEWTEGLPTLNARYYHCAVTLGGCVYALGGYRKGAPAEEAEFYDPLKEKWIPIANMIKGVGNATACVLHDVIYVIGGHCGYRGSCTYDKVQSYNSDINEWSLITSSPHPEYGLCSVPLENKLYLVGGQTTITECYDPEQNEWREIAPMMERRMECGAVIMNGCIYVTGGYPYSKGTYLQSIEKYDPDLNKWEIVGNLPSAMRSHGCVCVYNV.

The region spanning 36–104 is the BTB domain; the sequence is TDITLQCPSG…AYTSQIEITE (69 aa). Positions 139–240 constitute a BACK domain; the sequence is CIGMHSFAEF…DPVYLKTALG (102 aa). 6 Kelch repeats span residues 274-320, 321-369, 370-416, 418-466, 467-508, and 510-557; these read TMYI…CLGP, NIYV…TLGG, CVYA…VLHD, IYVI…PLEN, KLYL…IMNG, and IYVT…CVYN.

The chain is Kelch-like protein 23 (KLHL23) from Pongo abelii (Sumatran orangutan).